The chain runs to 559 residues: 3-phosphoinositide-dependent protein kinase 1 (559 aa).

Tyr-9 carries the phosphotyrosine; by SRC and INSR modification. Ser-25 is subject to Phosphoserine. A disordered region spans residues 25-83; it reads SPSMVRSQTEPSSSPGIPSGVSRQGSTMDGTTAEARPSTNPLQQHPAQLPPQPRKKRPE. A compositionally biased stretch (low complexity) spans 35 to 46; the sequence is PSSSPGIPSGVS. The region spanning 85–345 is the Protein kinase domain; sequence FKFGKILGEG…YGPLKAHPFF (261 aa). ATP contacts are provided by residues 95 to 97 and Lys-114; that span reads SFS. The segment at 116–160 is PIF-pocket; it reads LEKRHIIKENKVPYVTRERDVMSRLDHPFFVKLYFTFQDDEKLYF. ATP is bound by residues 163 to 165 and Glu-169; that span reads SYA. The Proton acceptor role is filled by Asp-208. The ATP site is built by Glu-212 and Asp-226. Phosphoserine is present on Ser-244. An N6-acetyllysine modification is found at Lys-307. Thr-357 carries the phosphothreonine; by MELK modification. Residues Tyr-376 and Tyr-379 each carry the phosphotyrosine; by SRC and INSR modification. At Ser-396 the chain carries Phosphoserine. Position 397 is a phosphoserine; by MAP3K5 (Ser-397). A Phosphoserine modification is found at Ser-399. A Phosphoserine; by MAP3K5 modification is found at Ser-401. Position 413 is a phosphoserine (Ser-413). A PH domain is found at 462–553; that stretch reads KMGPVDKRKG…EVWRQQYQSS (92 aa). A Phosphoserine; by PKC/PRKCQ modification is found at Ser-504. Thr-516 bears the Phosphothreonine; by autocatalysis mark. At Ser-532 the chain carries Phosphoserine; by PKC/PRKCQ.

Belongs to the protein kinase superfamily. AGC Ser/Thr protein kinase family. PDPK1 subfamily. In terms of assembly, homodimer in its autoinhibited state. Active as monomer. Interacts with NPRL2, PPARG, PAK1, PTK2B, GRB14, PKN1 (via C-terminus), STRAP and IKKB. The Tyr-9 phosphorylated form interacts with SRC, RASA1 and CRK (via their SH2 domains). Interacts with SGK3 in a phosphorylation-dependent manner. The tyrosine-phosphorylated form interacts with PTPN6. The Ser-244 phosphorylated form interacts with YWHAH and YWHAQ. Binds INSR in response to insulin. Interacts (via PH domain) with SMAD3, SMAD4 and SMAD7. Interacts with PKN2; the interaction stimulates PDPK1 autophosphorylation, its PI(3,4,5)P3-dependent kinase activity toward 'Ser-473' of AKT1 but also activates its kinase activity toward PRKCD and PRKCZ. In terms of processing, phosphorylation on Ser-244 in the activation loop is required for full activity. PDPK1 itself can autophosphorylate Ser-244, leading to its own activation. Autophosphorylation is inhibited by the apoptotic C-terminus cleavage product of PKN2. Tyr-9 phosphorylation is critical for stabilization of both PDPK1 and the PDPK1/SRC complex via HSP90-mediated protection of PDPK1 degradation. Angiotensin II stimulates the tyrosine phosphorylation of PDPK1 in vascular smooth muscle in a calcium- and SRC-dependent manner. Phosphorylated on Tyr-9, Tyr-376 and Tyr-379 by INSR in response to insulin. Palmitate negatively regulates autophosphorylation at Ser-244 and palmitate-induced phosphorylation at Ser-532 and Ser-504 by PKC/PRKCQ negatively regulates its ability to phosphorylate PKB/AKT1. Phosphorylation at Thr-357 by MELK partially inhibits kinase activity, the inhibition is cooperatively enhanced by phosphorylation at Ser-397 and Ser-401 by MAP3K5. Monoubiquitinated in the kinase domain, deubiquitinated by USP4.

Its subcellular location is the cytoplasm. It localises to the nucleus. It is found in the cell membrane. The protein resides in the cell junction. The protein localises to the focal adhesion. The catalysed reaction is L-seryl-[protein] + ATP = O-phospho-L-seryl-[protein] + ADP + H(+). It catalyses the reaction L-threonyl-[protein] + ATP = O-phospho-L-threonyl-[protein] + ADP + H(+). Homodimerization regulates its activity by maintaining the kinase in an autoinhibitory conformation. NPRL2 down-regulates its activity by interfering with tyrosine phosphorylation at the Tyr-9, Tyr-376 and Tyr-379 residues. The 14-3-3 protein YWHAQ acts as a negative regulator by association with the residues surrounding the Ser-244 residue. STRAP positively regulates its activity by enhancing its autophosphorylation and by stimulating its dissociation from YWHAQ. SMAD2, SMAD3, SMAD4 and SMAD7 also positively regulate its activity by stimulating its dissociation from YWHAQ. Activated by phosphorylation on Tyr-9, Tyr-376 and Tyr-379 by INSR in response to insulin. Functionally, serine/threonine kinase which acts as a master kinase, phosphorylating and activating a subgroup of the AGC family of protein kinases. Its targets include: protein kinase B (PKB/AKT1, PKB/AKT2, PKB/AKT3), p70 ribosomal protein S6 kinase (RPS6KB1), p90 ribosomal protein S6 kinase (RPS6KA1, RPS6KA2 and RPS6KA3), cyclic AMP-dependent protein kinase (PRKACA), protein kinase C (PRKCD and PRKCZ), serum and glucocorticoid-inducible kinase (SGK1, SGK2 and SGK3), p21-activated kinase-1 (PAK1), TSSK3, protein kinase PKN (PKN1 and PKN2). Plays a central role in the transduction of signals from insulin by providing the activating phosphorylation to PKB/AKT1, thus propagating the signal to downstream targets controlling cell proliferation and survival, as well as glucose and amino acid uptake and storage. Negatively regulates the TGF-beta-induced signaling by: modulating the association of SMAD3 and SMAD7 with TGF-beta receptor, phosphorylating SMAD2, SMAD3, SMAD4 and SMAD7, preventing the nuclear translocation of SMAD3 and SMAD4 and the translocation of SMAD7 from the nucleus to the cytoplasm in response to TGF-beta. Activates PPARG transcriptional activity and promotes adipocyte differentiation. Activates the NF-kappa-B pathway via phosphorylation of IKKB. The tyrosine phosphorylated form is crucial for the regulation of focal adhesions by angiotensin II. Controls proliferation, survival, and growth of developing pancreatic cells. Participates in the regulation of Ca(2+) entry and Ca(2+)-activated K(+) channels of mast cells. Essential for the motility of vascular endothelial cells (ECs) and is involved in the regulation of their chemotaxis. Plays a critical role in cardiac homeostasis by serving as a dual effector for cell survival and beta-adrenergic response. Plays an important role during thymocyte development by regulating the expression of key nutrient receptors on the surface of pre-T cells and mediating Notch-induced cell growth and proliferative responses. Provides negative feedback inhibition to toll-like receptor-mediated NF-kappa-B activation in macrophages. The polypeptide is 3-phosphoinositide-dependent protein kinase 1 (Pdpk1) (Rattus norvegicus (Rat)).